We begin with the raw amino-acid sequence, 565 residues long: Adenine deaminase (565 aa).

Belongs to the metallo-dependent hydrolases superfamily. Adenine deaminase family. Mn(2+) serves as cofactor.

It catalyses the reaction adenine + H2O + H(+) = hypoxanthine + NH4(+). The chain is Adenine deaminase from Gluconobacter oxydans (strain 621H) (Gluconobacter suboxydans).